Reading from the N-terminus, the 122-residue chain is uncharacterized protein (122 aa).

Residues 79-90 are compositionally biased toward polar residues; the sequence is NERVTSRVTNSR. The segment at 79-122 is disordered; sequence NERVTSRVTNSRTESESNGNGNATGNTSSNANSNGNANGIYIRK. Over residues 94–122 the composition is skewed to low complexity; sequence ESNGNGNATGNTSSNANSNGNANGIYIRK.

This is an uncharacterized protein from Leptolyngbya boryana (Plectonema boryanum).